A 250-amino-acid polypeptide reads, in one-letter code: Imidazole glycerol phosphate synthase subunit HisF (250 aa).

Catalysis depends on residues aspartate 11 and aspartate 130.

Belongs to the HisA/HisF family. Heterodimer of HisH and HisF.

It is found in the cytoplasm. The catalysed reaction is 5-[(5-phospho-1-deoxy-D-ribulos-1-ylimino)methylamino]-1-(5-phospho-beta-D-ribosyl)imidazole-4-carboxamide + L-glutamine = D-erythro-1-(imidazol-4-yl)glycerol 3-phosphate + 5-amino-1-(5-phospho-beta-D-ribosyl)imidazole-4-carboxamide + L-glutamate + H(+). It participates in amino-acid biosynthesis; L-histidine biosynthesis; L-histidine from 5-phospho-alpha-D-ribose 1-diphosphate: step 5/9. IGPS catalyzes the conversion of PRFAR and glutamine to IGP, AICAR and glutamate. The HisF subunit catalyzes the cyclization activity that produces IGP and AICAR from PRFAR using the ammonia provided by the HisH subunit. In Bacteroides fragilis (strain ATCC 25285 / DSM 2151 / CCUG 4856 / JCM 11019 / LMG 10263 / NCTC 9343 / Onslow / VPI 2553 / EN-2), this protein is Imidazole glycerol phosphate synthase subunit HisF.